A 228-amino-acid polypeptide reads, in one-letter code: Ras-related protein Rab-32D (228 aa).

GTP is bound at residue 16-23 (GDVNVGKT). The Effector region signature appears at 38 to 46 (YKSTIGADF). GTP-binding positions include 64–68 (DTAGQ) and 128–131 (NKSD). The tract at residues 183–228 (SDNEQFNDSPDEETSSITLLGTSKKHDNTNPNKPSTSSPSSCFNCK) is disordered. Over residues 185-196 (NEQFNDSPDEET) the composition is skewed to acidic residues. Residues 211 to 228 (TNPNKPSTSSPSSCFNCK) are compositionally biased toward low complexity. A lipid anchor (S-geranylgeranyl cysteine) is attached at Cys-224.

It belongs to the small GTPase superfamily. Rab family.

This chain is Ras-related protein Rab-32D (rab32D), found in Dictyostelium discoideum (Social amoeba).